An 86-amino-acid polypeptide reads, in one-letter code: Large ribosomal subunit protein bL27 (86 aa).

Over residues 1–10 (MAQKKGGGST) the composition is skewed to gly residues. A disordered region spans residues 1-20 (MAQKKGGGSTRNGRDSESKR).

It belongs to the bacterial ribosomal protein bL27 family.

The polypeptide is Large ribosomal subunit protein bL27 (Polynucleobacter necessarius subsp. necessarius (strain STIR1)).